Reading from the N-terminus, the 401-residue chain is uncharacterized protein (401 aa).

The next 7 helical transmembrane spans lie at 44–64, 69–89, 99–119, 130–150, 201–221, 246–266, and 286–306; these read LKYTIVYILALVNAFFLLVFI, LYSFGISSLTQGFARLLFVLL, LVFNIFYWLFYVIVNIPLIIF, ILSTHYVVASNVFGFIFSIIP, FIYAGIYGFVNGTSLAILYIL, ILFYVNTFILIIAILMGSFVA, and LFFSPNLIATFFSVLFTGTVV.

Its subcellular location is the cell membrane. This is an uncharacterized protein from Mycoplasma pneumoniae (strain ATCC 29342 / M129 / Subtype 1) (Mycoplasmoides pneumoniae).